The chain runs to 816 residues: Ribonucleoside-diphosphate reductase large subunit (816 aa).

An ATP-cone domain is found at 1 to 92 (MYVVKRDGRQ…VSNLHKNTKK (92 aa)). ATP contacts are provided by residues 5 to 6 (KR), 11 to 17 (ETVHFDK), T53, and D57. S202 and S217 together coordinate GDP. A disulfide bond links C218 and C444. DTTP-binding positions include 226-228 (DSI), K243, R256, and 263-264 (RG). N427 serves as a coordination point for GDP. N427 (proton acceptor) is an active-site residue. The active-site Cysteine radical intermediate is the C429. GDP contacts are provided by residues E431 and 623 to 626 (TAST). E431 acts as the Proton acceptor in catalysis.

Belongs to the ribonucleoside diphosphate reductase large chain family. As to quaternary structure, heterotetramer of two large/R1 and two small/R2 subunits. A radical transfer pathway may occur between 'Tyr-125' of protein R2 and R1. Post-translationally, contains a disulfide bonds. Binding of the substrate occurs primarily when the active-site cysteines are reduced. As to expression, highly expressed in actively growing tissues such as young leaves, shoot apices, inflorescences and carpels. Very low expression in cotyledons, adult and cauline leaves and senescent leaves.

Its subcellular location is the cytoplasm. It carries out the reaction a 2'-deoxyribonucleoside 5'-diphosphate + [thioredoxin]-disulfide + H2O = a ribonucleoside 5'-diphosphate + [thioredoxin]-dithiol. With respect to regulation, under complex allosteric control mediated by deoxynucleoside triphosphates and ATP binding to separate specificity and activation sites on the large subunit. The type of nucleotide bound at the specificity site determines substrate preference. It seems probable that ATP makes the enzyme reduce CDP and UDP, dGTP favors ADP reduction and dTTP favors GDP reduction. Stimulated by ATP and inhibited by dATP binding to the activity site. Its function is as follows. Provides the precursors necessary for DNA synthesis. Catalyzes the biosynthesis of deoxyribonucleotides from the corresponding ribonucleotides. R1 contains the binding sites for both substrates and allosteric effectors and carries out the actual reduction of the ribonucleotide. Ribonucleotide reductase (RNR) complex function is essential for efficient organellar DNA degradation in pollen. Involved in chloroplast division. The chain is Ribonucleoside-diphosphate reductase large subunit from Arabidopsis thaliana (Mouse-ear cress).